The primary structure comprises 189 residues: MTTASCIFPSQATQQDNIYGLSQITASLFISNSAVANDKLTLSNNHITTIINVSAEVVNTFFEDIQYVQVPVSDAPNSYLYDFFDPIADHIHGVEMRNGRTLLHCAAGVSRSATLCLAYLMKYHNMTLLDAHTWTKTCRPIIRPNNGFWEQLIHYEFKLFSRNTVRMIYSPIGLIPNIYEKEAYLMELM.

The Tyrosine-protein phosphatase domain occupies G20 to S161. Residues S43 to L128 form a sufficient for mitochondrial localization region. C105 serves as the catalytic Phosphocysteine intermediate.

It belongs to the protein-tyrosine phosphatase family. Non-receptor class dual specificity subfamily. In terms of assembly, microtubule inner protein component of sperm flagellar doublet microtubules. As to expression, selectively expressed in testis.

It localises to the cytoplasm. It is found in the nucleus. Its subcellular location is the mitochondrion inner membrane. The protein localises to the cytoskeleton. The protein resides in the flagellum axoneme. The catalysed reaction is O-phospho-L-tyrosyl-[protein] + H2O = L-tyrosyl-[protein] + phosphate. It carries out the reaction O-phospho-L-seryl-[protein] + H2O = L-seryl-[protein] + phosphate. It catalyses the reaction O-phospho-L-threonyl-[protein] + H2O = L-threonyl-[protein] + phosphate. Protein phosphatase component of the sperm flagellar doublet microtubules. May act as a regulator of sperm motility by mediating dephosphorylation of sperm doublet microtubule proteins. Can dephosphorylate single and diphosphorylated synthetic MAPK peptides, with preference for the phosphotyrosine and diphosphorylated forms over phosphothreonine. In Mus musculus (Mouse), this protein is Dual specificity phosphatase 21.